The following is a 557-amino-acid chain: Glypican-1 (557 aa).

An N-terminal signal peptide occupies residues 1 to 23; it reads MELRTRGWWLLCAAAALVVCARG. 7 disulfide bridges follow: Cys-32/Cys-68, Cys-62/Cys-255, Cys-69/Cys-258, Cys-190/Cys-342, Cys-245/Cys-278, Cys-267/Cys-414, and Cys-271/Cys-400. N-linked (GlcNAc...) asparagine glycans are attached at residues Asn-79 and Asn-116. The tract at residues 477–531 is disordered; it reads FQDASDDGSGSGSGGGCPDDTCGRRVSKKSSSSRTPLTHALPGLSEQEGQKTSAA. Residues Ser-485, Ser-487, and Ser-489 are each glycosylated (O-linked (Xyl...) (heparan sulfate) serine). A lipid anchor (GPI-anchor amidated serine) is attached at Ser-529. Positions 530-557 are cleaved as a propeptide — removed in mature form; it reads AATCPEPHSFFLLFLVTLVLAAARPRWR.

Belongs to the glypican family. Post-translationally, S-nitrosylated in a Cu(2+)-dependent manner. Nitric acid (NO) is released from the nitrosylated cysteines by ascorbate or by some other reducing agent, in a Cu(2+) or Zn(2+) dependent manner. This free nitric oxide is then capable of cleaving the heparan sulfate side chains. N- and O-glycosylated. N-glycosylation is mainly of the complex type containing sialic acid. O-glycosylated with heparan sulfate. The heparan sulfate chains can be cleaved either by the action of heparanase or, degraded by a deaminative process that uses nitric oxide (NO) released from the S-nitrosylated cysteines. This process is triggered by ascorbate, or by some other reducing agent, in a Cu(2+)- or Zn(2+) dependent manner. Cu(2+) ions are provided by ceruloproteins such as APP, PRNP or CP which associate with GCP1 in intracellular compartments or lipid rafts. In terms of processing, this cell-associated glypican is further processed to give rise to a medium-released species.

Its subcellular location is the cell membrane. The protein resides in the endosome. It localises to the secreted. It is found in the extracellular space. Cell surface proteoglycan that bears heparan sulfate. Binds, via the heparan sulfate side chains, alpha-4 (V) collagen and participates in Schwann cell myelination. May act as a catalyst in increasing the rate of conversion of prion protein PRPN(C) to PRNP(Sc) via associating (via the heparan sulfate side chains) with both forms of PRPN, targeting them to lipid rafts and facilitating their interaction. Required for proper skeletal muscle differentiation by sequestering FGF2 in lipid rafts preventing its binding to receptors (FGFRs) and inhibiting the FGF-mediated signaling. Binds Cu(2+) or Zn(2+) ions. The protein is Glypican-1 (Gpc1) of Mus musculus (Mouse).